Here is a 604-residue protein sequence, read N- to C-terminus: MSAKQLGDLKPLFIEWLKDEIDACGPRQEKMAMVYFRARESLKRFDQPITETAKVLKVKGIGNSIKNKLASKLAQYCQDNNIPLEDAAAPSHVVGISVTRVRTATQEKDDQSPKRKKRKYVPRKRSGAYAILLGALELGCPSRGLTKEEIIDAAAKYCDVSFVSNPLTREFYSAWTAIKVLIDHDLMLEQGRPRRYIVTEAGEQMAETLKHADSVIFPEDCPYQRRQQAPESTAEDHTELSASLSELVRQEHLPQNHSGMCFSFEPPSSAPSDYLDPGQKSANVASSPHRLRPPIGPSIDIVKARWNGTSYELWKPGSYDIELYIDHREVRAKSERDFFVNALLTRGVTVEGKALALGDMVWVARHRDSRSTCVLNFMLERKRLDDLAMSIRDNRFMEQKNRLKKTGCKHIFYLVEETSGTNVAGMEGAIKTSIWMTYVYSGFHVKRTRNADDTVEWLHDMTCTVQRYYCSKSLLVLRPREIANQEDYGSLLSAFRLQFERNNTSLECCHAFDCYQEVLGKTGLMTVKELYIRTLMLNRGVSLEKALAIQSKFPTLRSLMTAFRNCKSEEDGRRMLYLALLDQPASRRVGKALAATLWDTFGRR.

Positions 268 to 290 (SSAPSDYLDPGQKSANVASSPHR) are disordered. The 98-residue stretch at 322–419 (ELYIDHREVR…HIFYLVEETS (98 aa)) folds into the ERCC4 domain.

The protein belongs to the XPF family. As to quaternary structure, interacts with EME1. The cofactor is Mg(2+).

It localises to the nucleus. Its function is as follows. Interacts with EME1 to form a DNA structure-specific endonuclease with substrate preference for branched DNA structures with a 5'-end at the branch nick. Typical substrates include 3'-flap structures, D-loops, replication forks and nicked Holliday junctions. May be required in mitosis for the processing of stalled or collapsed replication fork intermediates. May be required in meiosis for the repair of meiosis-specific double strand breaks subsequent to single-end invasion (SEI). The protein is Crossover junction endonuclease MUS81 (MUS81) of Eremothecium gossypii (strain ATCC 10895 / CBS 109.51 / FGSC 9923 / NRRL Y-1056) (Yeast).